Here is a 1009-residue protein sequence, read N- to C-terminus: MKKKNWIYALIVTLIIIIAIVSMIFFVQTKYGDQSEKGSQSVSNKNNKIHIAIVNEDQPTTYNGKKVELGQAFIKRLANEKNYKFETVTRNVAESGLKNGGYQVMIVIPENFSKLAMQLDAKTPSKISLQYKTAVGQKEEVAKNTEKVVSNVLNDFNKNLVEIYLTSIIDNLHNAQKNVGAIMTREHGVNSKFSNYLLNPINDFPELFTDTLVNSISANKDITKWFQTYNKSLLSANSDTFRVNTDYNVSTLIEKQNSLFDEHNTAMDKMLQDYKSQKDSVELDNYINALKQMDSQIDQQSSMQDTGKEEYKQTVKENLDKLREIIQSQESPFSKGMIEDYRKQLTESLQDELANNKDLQDALNSIKMNNAQFAENLEKQLHDDIVKEPDTDTTFIYNMSKQDFIAAGLNEGEANKYEAIVKEAKRYKNEYNLKKPLAEHINLTDYDNQVAQDTSSLINDGVKVQRTETIKSNDINQLTVATDPHFNFEGDIKINGKKYDIKDQSVQLDTSNKEYKVEVNGVAKLKKDAEKDFLKDKTMHLQLLFGQANRQDEPNDKKATSVVDVTLNHNLDGRLSKDALSQQLSALSRFDAHYKMYTDTKGREDKPFDNKRLIDMMVDQVINDMESFKDDKVAVLHQIDSMEENSDKLIDDILNNKKNTTKNKEDISKLIDQLENVKKTFAEEPQEPKIDKGKNDEFNTMSSNLDKEISRISEKSTQLLSDTQESKTIADSVSGQLNQLDNNVNKLHATGRALGVRANDLNRQMAKNDKDNELFAKEFKKVLQNSKDGDRQNQALKAFMSNPVQKKNLENVLANNGNTEVISPTLFVLLMYLLSMITAYIFYSYERAKGQMNFIKDDYSSKNHLWNNVITSGVIGTTGLVEGLIVGLIAMNKFHVLAGYRAKFILMVILTMMVFVLINTYLLRQVKSIGMFLMIAALGLYFVAMNNLKAAGQGVTNKISPLSYIDNMFFNYLNAEHPIGLALVILTVLVIIGFVLNMFIKHFKKERLI.

The next 6 membrane-spanning stretches (helical) occupy residues 7–27, 822–842, 869–889, 903–923, 928–948, and 979–999; these read IYALIVTLIIIIAIVSMIFFV, ISPTLFVLLMYLLSMITAYIF, VITSGVIGTTGLVEGLIVGLI, KFILMVILTMMVFVLINTYLL, SIGMFLMIAALGLYFVAMNNL, and IGLALVILTVLVIIGFVLNMF.

Belongs to the EsaA family. In terms of assembly, homodimer. Interacts with EssB.

It is found in the cell membrane. Its function is as follows. Component of the type VII secretion system (Ess). Provides together with EssB and other components such as EssC and EssE a secretion platform across the cytoplasmic membrane in the host. This chain is Type VII secretion system accessory factor EsaA, found in Staphylococcus aureus (strain Mu50 / ATCC 700699).